Consider the following 61-residue polypeptide: Photosystem II reaction center protein K (61 aa).

The propeptide occupies 1–24 (MPNILSLTCICFNSVIYPTSFFFA). Residues 32 to 52 (IFNPIVDFMPVIPVLFFLLAF) form a helical membrane-spanning segment.

Belongs to the PsbK family. As to quaternary structure, PSII is composed of 1 copy each of membrane proteins PsbA, PsbB, PsbC, PsbD, PsbE, PsbF, PsbH, PsbI, PsbJ, PsbK, PsbL, PsbM, PsbT, PsbX, PsbY, PsbZ, Psb30/Ycf12, at least 3 peripheral proteins of the oxygen-evolving complex and a large number of cofactors. It forms dimeric complexes.

It is found in the plastid. The protein localises to the chloroplast thylakoid membrane. In terms of biological role, one of the components of the core complex of photosystem II (PSII). PSII is a light-driven water:plastoquinone oxidoreductase that uses light energy to abstract electrons from H(2)O, generating O(2) and a proton gradient subsequently used for ATP formation. It consists of a core antenna complex that captures photons, and an electron transfer chain that converts photonic excitation into a charge separation. The protein is Photosystem II reaction center protein K of Oryza nivara (Indian wild rice).